The sequence spans 373 residues: Peptidoglycan recognition protein 4 (373 aa).

Residues 1–17 (MLPWLLVFSALGIQAWG) form the signal peptide. N-linked (GlcNAc...) asparagine glycosylation is found at Asn22, Asn39, Asn109, Asn145, and Asn247. 2 N-acetylmuramoyl-L-alanine amidase domains span residues 74–212 (TPVN…ACPG) and 235–358 (YGII…LSPG). 3 cysteine pairs are disulfide-bonded: Cys210-Cys332, Cys226-Cys270, and Cys246-Cys252. 2 residues coordinate peptidoglycan: Tyr263 and Tyr274. 2 interaction with murein regions span residues 293–302 (QGSSTPGYDD) and 353–354 (RT).

The protein belongs to the N-acetylmuramoyl-L-alanine amidase 2 family. In terms of assembly, homodimer; disulfide-linked. Heterodimer with PGLYRP3; disulfide-linked. In terms of processing, N-glycosylated. As to expression, detected in skin epidermis, eccrine sweat glands and ducts, mucous cells in the submandibular salivary gland, mucous cells in the throat, ciliary body epithelial cells of the eye, small intestine, colon, stomach and in mature epithelial cells of the tongue (at protein level). High expression in skin and esophagus. Expressed also to a much lesser extent in the tonsils and thymus.

The protein resides in the secreted. Pattern receptor that binds to murein peptidoglycans (PGN) of Gram-positive bacteria. Has bactericidal activity towards Gram-positive bacteria. May kill Gram-positive bacteria by interfering with peptidoglycan biosynthesis. Also binds to Gram-negative bacteria, and has bacteriostatic activity towards Gram-negative bacteria. Plays a role in innate immunity. The polypeptide is Peptidoglycan recognition protein 4 (PGLYRP4) (Homo sapiens (Human)).